Here is a 196-residue protein sequence, read N- to C-terminus: Orotate phosphoribosyltransferase (196 aa).

117 to 125 (EDIVTTGLS) lines the 5-phospho-alpha-D-ribose 1-diphosphate pocket. Orotate-binding residues include threonine 121 and arginine 149.

This sequence belongs to the purine/pyrimidine phosphoribosyltransferase family. PyrE subfamily. In terms of assembly, homodimer. Requires Mg(2+) as cofactor.

The catalysed reaction is orotidine 5'-phosphate + diphosphate = orotate + 5-phospho-alpha-D-ribose 1-diphosphate. Its pathway is pyrimidine metabolism; UMP biosynthesis via de novo pathway; UMP from orotate: step 1/2. Functionally, catalyzes the transfer of a ribosyl phosphate group from 5-phosphoribose 1-diphosphate to orotate, leading to the formation of orotidine monophosphate (OMP). This chain is Orotate phosphoribosyltransferase, found in Methylobacterium sp. (strain 4-46).